The following is a 457-amino-acid chain: Aromatic amino acid permease FywP (457 aa).

The next 12 helical transmembrane spans lie at 16–36 (IVML…SGKV), 43–63 (SVLL…YGVG), 91–111 (FADW…EAGV), 114–134 (FLAI…VAVL), 154–174 (AFIK…LLVI), 205–225 (GFLT…LAAI), 243–263 (GVLI…LHLL), 292–312 (IVLV…IYAT), 342–362 (NAIL…AVLG), 373–393 (ISFT…VLYF), 403–423 (VKLA…MQII), and 424–444 (TNPW…YFSY).

It belongs to the amino acid-polyamine-organocation (APC) superfamily. Amino acid transporter (AAT) (TC 2.A.3.1) family.

The protein resides in the cell membrane. Its function is as follows. Involved in phenylalanine and tyrosine uptake. Also has affinity for tryptophan. Plays no significant role in the excretion of accumulated phenylalanine. The protein is Aromatic amino acid permease FywP of Lactococcus lactis subsp. cremoris (strain MG1363).